Here is a 489-residue protein sequence, read N- to C-terminus: Protein SOF1 (489 aa).

WD repeat units lie at residues 65 to 105 (GHRD…EFVS), 113 to 158 (VTGL…YSNK), 177 to 214 (DGES…PVSD), 217 to 257 (WGAD…PTQK), 259 to 299 (VQTM…RSLN), 303 to 342 (DHVS…SREI), and 346 to 385 (KRMQ…RSNV). 2 stretches are compositionally biased toward basic and acidic residues: residues 440–459 (REAN…ERKK) and 466–489 (HKYE…TQEK). The tract at residues 440–489 (REANERRTRKDMPYISERKKQIVGTVHKYEDSGRDRKRRKEDDKRDTQEK) is disordered.

Belongs to the WD repeat DCAF13/WDSOF1 family. As to quaternary structure, interacts with snoRNA U3. Interacts with NOP1 and MPP10. Component of the ribosomal small subunit (SSU) processome composed of at least 40 protein subunits and snoRNA U3.

The protein resides in the nucleus. Its subcellular location is the nucleolus. Its function is as follows. Required for ribosomal RNA processing. The chain is Protein SOF1 (SOF1) from Saccharomyces cerevisiae (strain ATCC 204508 / S288c) (Baker's yeast).